The sequence spans 306 residues: Curved DNA-binding protein (306 aa).

The J domain maps to 5 to 69 (DYYAIMGVKP…QRRAEYDQMW (65 aa)).

The protein localises to the cytoplasm. The protein resides in the nucleoid. Its function is as follows. DNA-binding protein that preferentially recognizes a curved DNA sequence. It is probably a functional analog of DnaJ; displays overlapping activities with DnaJ, but functions under different conditions, probably acting as a molecular chaperone in an adaptive response to environmental stresses other than heat shock. Lacks autonomous chaperone activity; binds native substrates and targets them for recognition by DnaK. Its activity is inhibited by the binding of CbpM. The chain is Curved DNA-binding protein from Escherichia coli O17:K52:H18 (strain UMN026 / ExPEC).